We begin with the raw amino-acid sequence, 91 residues long: Small ribosomal subunit protein uS19 (91 aa).

This sequence belongs to the universal ribosomal protein uS19 family.

Functionally, protein S19 forms a complex with S13 that binds strongly to the 16S ribosomal RNA. This Ralstonia pickettii (strain 12J) protein is Small ribosomal subunit protein uS19.